A 560-amino-acid chain; its full sequence is Digoxin reductase (560 aa).

A signal peptide (tat-type signal) is located at residues 1 to 48 (MEYGKCRGIERGMGRRDFLKAATLLGATAAGAGMLAGCAPKSASEAQA).

Belongs to the FAD-dependent oxidoreductase 2 family. In terms of assembly, may form a membrane-associated complex with Cgr1. Requires FAD as cofactor. The cofactor is [4Fe-4S] cluster. Post-translationally, predicted to be exported by the Tat system. The position of the signal peptide cleavage has not been experimentally proven.

It is found in the cell membrane. It carries out the reaction digoxin + 2 Fe(II)-[cytochrome c] + 3 H(+) = dihydrodigoxin + 2 Fe(III)-[cytochrome c]. The catalysed reaction is digitoxin + 2 Fe(II)-[cytochrome c] + 3 H(+) = dihydrodigitoxin + 2 Fe(III)-[cytochrome c]. It catalyses the reaction digoxigenin + 2 Fe(II)-[cytochrome c] + 3 H(+) = dihydrodigoxigenin + 2 Fe(III)-[cytochrome c]. The enzyme catalyses ouabain + 2 Fe(II)-[cytochrome c] + 3 H(+) = dihydroouabain + 2 Fe(III)-[cytochrome c]. It carries out the reaction ouabagenin + 2 Fe(II)-[cytochrome c] + 3 H(+) = dihydroouabagenin + 2 Fe(III)-[cytochrome c]. In terms of biological role, involved in the inactivation of the cardiac medication and plant natural product digoxin, thus decreasing drug efficacy and toxicity. Catalyzes the reduction of the alpha,beta-unsaturated butyrolactone ring of digoxin to the inactive metabolite dihydrodigoxin. Likely uses the cytochrome Cgr1 as the physiological electron donor, encoded by the adjacent gene in the locus. Only reduces digoxin and other cardenolide toxins, such as digitoxin, digoxigenin, ouabain and ouabagenin. Therefore is a specialized enzyme present in some gut bacteria E.lenta that protects their human host against ingested plant toxins. This chain is Digoxin reductase, found in Eggerthella lenta (strain ATCC 25559 / DSM 2243 / CCUG 17323 / JCM 9979 / KCTC 3265 / NCTC 11813 / VPI 0255 / 1899 B) (Eubacterium lentum).